Here is a 355-residue protein sequence, read N- to C-terminus: S-adenosylmethionine:tRNA ribosyltransferase-isomerase (355 aa).

This sequence belongs to the QueA family. As to quaternary structure, monomer.

It is found in the cytoplasm. The catalysed reaction is 7-aminomethyl-7-carbaguanosine(34) in tRNA + S-adenosyl-L-methionine = epoxyqueuosine(34) in tRNA + adenine + L-methionine + 2 H(+). Its pathway is tRNA modification; tRNA-queuosine biosynthesis. In terms of biological role, transfers and isomerizes the ribose moiety from AdoMet to the 7-aminomethyl group of 7-deazaguanine (preQ1-tRNA) to give epoxyqueuosine (oQ-tRNA). The protein is S-adenosylmethionine:tRNA ribosyltransferase-isomerase of Burkholderia orbicola (strain AU 1054).